A 278-amino-acid chain; its full sequence is Large ribosomal subunit protein uL2 (278 aa).

2 disordered regions span residues 27–57 (STPEKSLVRPLHSKGGRNNAGRVTVRHQGGG) and 224–278 (VAMN…NKKR). Positions 258–278 (RSPKKASSKYIVRRRKTNKKR) are enriched in basic residues.

It belongs to the universal ribosomal protein uL2 family. As to quaternary structure, part of the 50S ribosomal subunit. Forms a bridge to the 30S subunit in the 70S ribosome.

Functionally, one of the primary rRNA binding proteins. Required for association of the 30S and 50S subunits to form the 70S ribosome, for tRNA binding and peptide bond formation. It has been suggested to have peptidyltransferase activity; this is somewhat controversial. Makes several contacts with the 16S rRNA in the 70S ribosome. The chain is Large ribosomal subunit protein uL2 from Streptomyces avermitilis (strain ATCC 31267 / DSM 46492 / JCM 5070 / NBRC 14893 / NCIMB 12804 / NRRL 8165 / MA-4680).